A 571-amino-acid polypeptide reads, in one-letter code: Urease subunit alpha (571 aa).

The 439-residue stretch at 133 to 571 (GGIDTHIHFI…LPLAQRYFLF (439 aa)) folds into the Urease domain. His138, His140, and Lys221 together coordinate Ni(2+). Lys221 carries the post-translational modification N6-carboxylysine. Residue His223 participates in substrate binding. The Ni(2+) site is built by His250 and His276. The active-site Proton donor is His324. Asp364 is a binding site for Ni(2+).

Belongs to the metallo-dependent hydrolases superfamily. Urease alpha subunit family. As to quaternary structure, heterotrimer of UreA (gamma), UreB (beta) and UreC (alpha) subunits. Three heterotrimers associate to form the active enzyme. The cofactor is Ni cation. Carboxylation allows a single lysine to coordinate two nickel ions.

The protein resides in the cytoplasm. The enzyme catalyses urea + 2 H2O + H(+) = hydrogencarbonate + 2 NH4(+). Its pathway is nitrogen metabolism; urea degradation; CO(2) and NH(3) from urea (urease route): step 1/1. The protein is Urease subunit alpha of Corynebacterium efficiens (strain DSM 44549 / YS-314 / AJ 12310 / JCM 11189 / NBRC 100395).